Reading from the N-terminus, the 383-residue chain is MASILTLDGLYAEVPKFLPEALREGCAGKKPLSFYIQQILNLMGCDGNEYHVLFTSSSEEANTHMIMAVVRRHLLRTQQRPHVIIGAAEPPSVTECVKALAQEKRCVYTIIPLKNFEIDPVAVYDAIQSNTCLACISGTNAVVKTFNKLQEISKVLGAIPLHSEMSDVVYQGCIKQHPPADSFSLNSLYGFLGVGVLGIKKKAMQGLGPLIFGGGLRGGSPNVPGIHAMYKTLTQQRPSIKKINTVHKLFMKILKKHQHVYLPIEGMSSNGMPSNGMPSSGIPVEGPKSLPGYILFSVGRSAEELQKKIFTKFNVKVGRIVNLQEVLFRIKIPQKYWETLLFIQLREDLTKEDIKRVMAILMYLDTVTPRGSLPPPSYSSSFS.

Pyridoxal 5'-phosphate is bound by residues 58–59 (SE) and 184–186 (SLN).

The protein belongs to the class-V pyridoxal-phosphate-dependent aminotransferase family. NifS/IscS subfamily. It depends on pyridoxal 5'-phosphate as a cofactor.

The protein resides in the virion. This chain is NifS-like protein, found in African swine fever virus (isolate Pig/Kenya/KEN-50/1950) (ASFV).